The following is a 117-amino-acid chain: Photosystem II reaction center Psb28 protein (117 aa).

Belongs to the Psb28 family. As to quaternary structure, part of the photosystem II complex.

The protein resides in the cellular thylakoid membrane. This is Photosystem II reaction center Psb28 protein from Prochlorococcus marinus (strain AS9601).